An 88-amino-acid chain; its full sequence is KTx type I (88 aa).

An N-terminal signal peptide occupies residues 1-19 (MKTTLVVVVLACIVALTSA). Positions 54–88 (CKDVLSEFSCGVLKKDGQCNKADIQAKCKLTCDKC) constitute a ShKT domain. 3 disulfides stabilise this stretch: Cys-54-Cys-88, Cys-63-Cys-81, and Cys-72-Cys-85.

This sequence belongs to the sea anemone type 1 potassium channel toxin family. Expressed both outside and in acontia, a specialised envenomation structure laden with batteries of venom-containing nematocysts found only in the superfamily Metridioidea.

It localises to the secreted. The protein localises to the nematocyst. Functionally, inhibits voltage-gated potassium channels (Kv1/KCNA). The protein is KTx type I of Calliactis polypus (Hermit crab anemone).